The primary structure comprises 239 residues: Fatty acid metabolism regulator protein (239 aa).

The HTH gntR-type domain maps to Gln6–Phe74. The segment at residues Glu34–Gln53 is a DNA-binding region (H-T-H motif).

Homodimer.

It is found in the cytoplasm. Functionally, multifunctional regulator of fatty acid metabolism. The sequence is that of Fatty acid metabolism regulator protein from Salmonella paratyphi C (strain RKS4594).